The primary structure comprises 522 residues: Serine/threonine-protein kinase BSK1-2 (522 aa).

Residues methionine 1–serine 54 form a disordered region. The N-myristoyl glycine moiety is linked to residue glycine 2. One can recognise a Protein kinase domain in the interval alanine 79–glutamine 338. ATP is bound by residues serine 85 to valine 93 and lysine 111. The active-site Proton acceptor is aspartate 205.

It belongs to the protein kinase superfamily. Ser/Thr protein kinase family.

It localises to the cell membrane. The catalysed reaction is L-seryl-[protein] + ATP = O-phospho-L-seryl-[protein] + ADP + H(+). It catalyses the reaction L-threonyl-[protein] + ATP = O-phospho-L-threonyl-[protein] + ADP + H(+). Its function is as follows. Probable serine/threonine kinase that functions as a positive regulator of plant immunity. May be involved in the regulation of pattern-triggered immunity (PTI). Does not seem to be involved in responses to brassinosteroid (BR) signaling. This is Serine/threonine-protein kinase BSK1-2 from Oryza sativa subsp. japonica (Rice).